Here is an 86-residue protein sequence, read N- to C-terminus: Progonadoliberin-2 (86 aa).

A signal peptide spans M1 to S24. Q25 bears the Pyrrolidone carboxylic acid mark. G34 is subject to Glycine amide.

This sequence belongs to the GnRH family.

Its subcellular location is the secreted. Stimulates the secretion of gonadotropins. This is Progonadoliberin-2 (gnrh2) from Rutilus rutilus (Roach).